Reading from the N-terminus, the 355-residue chain is Anhydro-N-acetylmuramic acid kinase (355 aa).

9–16 (GTSLDGVD) is an ATP binding site.

The protein belongs to the anhydro-N-acetylmuramic acid kinase family.

It catalyses the reaction 1,6-anhydro-N-acetyl-beta-muramate + ATP + H2O = N-acetyl-D-muramate 6-phosphate + ADP + H(+). It participates in amino-sugar metabolism; 1,6-anhydro-N-acetylmuramate degradation. Its pathway is cell wall biogenesis; peptidoglycan recycling. Catalyzes the specific phosphorylation of 1,6-anhydro-N-acetylmuramic acid (anhMurNAc) with the simultaneous cleavage of the 1,6-anhydro ring, generating MurNAc-6-P. Is required for the utilization of anhMurNAc either imported from the medium or derived from its own cell wall murein, and thus plays a role in cell wall recycling. This is Anhydro-N-acetylmuramic acid kinase from Paramagnetospirillum magneticum (strain ATCC 700264 / AMB-1) (Magnetospirillum magneticum).